The following is a 281-amino-acid chain: MFSGLTLNCVLLLLQLLLARSLENAYVFEVGKNAYLPCSYTLSTPGALVPMCWGKGFCPWSQCTNELLRTDERNVTYQKSSRYQLKGDLNKGDVSLIIKNVTLDDHGTYCCRIQFPGLMNDKKLELKLDIKAAKVTPAQTAHGDSTTASPRTLTTERNGSETQTLVTLHNNNGTKISTWADEIKDSGETIRTAIHIGVGVSAGLTLALIIGVLILKWYSCKKKKLSSLSLITLANLPPGGLANAGAVRIRSEENIYTIEENVYEVENSNEYYCYVNSQQPS.

Positions 1-19 (MFSGLTLNCVLLLLQLLLA) are cleaved as a signal peptide. Residues 20–125 (RSLENAYVFE…PGLMNDKKLE (106 aa)) enclose the Ig-like V-type domain. Over 20 to 193 (RSLENAYVFE…KDSGETIRTA (174 aa)) the chain is Extracellular. 3 cysteine pairs are disulfide-bonded: C38/C111, C52/C63, and C58/C110. Positions 61 and 62 each coordinate a 1,2-diacyl-sn-glycero-3-phospho-L-serine. N74 and N100 each carry an N-linked (GlcNAc...) asparagine glycan. A 1,2-diacyl-sn-glycero-3-phospho-L-serine is bound at residue R112. Ca(2+) is bound by residues F115 and G117. M119 contacts a 1,2-diacyl-sn-glycero-3-phospho-L-serine. N120 contacts Ca(2+). The disordered stretch occupies residues 139 to 160 (QTAHGDSTTASPRTLTTERNGS). An O-linked (GalNAc...) threonine glycan is attached at T146. Residue N172 is glycosylated (N-linked (GlcNAc...) asparagine). Residues 194–214 (IHIGVGVSAGLTLALIIGVLI) traverse the membrane as a helical segment. Residues 215-281 (LKWYSCKKKK…YCYVNSQQPS (67 aa)) are Cytoplasmic-facing. The segment at 252-270 (EENIYTIEENVYEVENSNE) is interaction with BAG6. A Phosphotyrosine; by ITK modification is found at Y256.

It belongs to the immunoglobulin superfamily. TIM family. Interacts with HMGB1; impairs HMGB1 binding to B-DNA and likely HMGB1-mediated innate immune response. Interacts with BAG6. Interacts (phosphorylated) with PIK3R1 and PIK3R2. Interacts (not dependent on its phosphorylation status) with FYN. Interacts (in basal state T-cells) with VAV1; AKT1/2, LCP2, ZAP70, SYK, PIK3R1, FYN, SH3BP2 and SH2D2A. Interacts (in activated T-cells) with LCK and PLCG. Interacts with ILF3; this interaction promotes ILF3 ubiquitination and degradation. Phosphorylated on tyrosine residues; modestly increased after TCR/CD28 stimulation. Can be phosphorylated in the cytoplasmic domain by FYN. Phosphorylation at Tyr-256 is increased by stimulation with ligand LGALS9. Post-translationally, N-glycosylated. In terms of tissue distribution, expressed in T-helper type 1 lymphocytes. Not expressed by naive T-cells but up-regulated as they differentiate into T-helper-1 cells. Also expressed by differentiated type 1 CD8+ cytotoxic T-cells. Expressed on peritoneal exudate macrophages, monocytes, and splenic dendritic cells (DCs). Expression on natural killer (NK) cells is inversely associated with IFN-gamma production during the initial 24 hours of LPS-induced endotoxic shock. Expressed on mast cells.

The protein resides in the membrane. Its subcellular location is the cell junction. It localises to the secreted. Cell surface receptor implicated in modulating innate and adaptive immune responses. Generally accepted to have an inhibiting function. Reports on stimulating functions suggest that the activity may be influenced by the cellular context and/or the respective ligand. Regulates macrophage activation. Inhibits T-helper type 1 lymphocyte (Th1)-mediated auto- and alloimmune responses and promotes immunological tolerance. In CD8+ cells attenuates TCR-induced signaling, specifically by blocking NF-kappaB and NFAT promoter activities resulting in the loss of IL-2 secretion. The function may implicate its association with LCK proposed to impair phosphorylation of TCR subunits. In contrast, shown to activate TCR-induced signaling in T-cells probably implicating ZAP70, LCP2, LCK and FYN. Expressed on Treg cells can inhibit Th17 cell responses. Receptor for LGALS9. Binding to LGALS9 is believed to result in suppression of T-cell responses; the resulting apoptosis of antigen-specific cells may implicate HAVCR2 phosphorylation and disruption of its association with BAG6. Binding to LGALS9 is proposed to be involved in innate immune response to intracellular pathogens. Expressed on Th1 cells interacts with LGALS9 expressed on Mycobacterium tuberculosis-infected macrophages to stimulate antibactericidal activity including IL-1 beta secretion and to restrict intracellular bacterial growth. However, the function as receptor for LGALS9 has been challenged. Also reported to enhance CD8+ T-cell responses to an acute infection such as by Listeria monocytogenes. Receptor for phosphatidylserine (PtSer); PtSer-binding is calcium-dependent. May recognize PtSer on apoptotic cells leading to their phagocytosis. Mediates the engulfment of apoptotic cells by dendritic cells. Expressed on T-cells, promotes conjugation but not engulfment of apoptotic cells. Expressed on dendritic cells (DCs) positively regulates innate immune response and in synergy with Toll-like receptors promotes secretion of TNF-alpha. In tumor-imfiltrating DCs suppresses nucleic acid-mediated innate immune repsonse by interaction with HMGB1 and interfering with nucleic acid-sensing and trafficking of nucleid acids to endosomes. Can enhance mast cell production of Th2 cytokines Il-4, IL-6 and IL-13. Expressed on natural killer (NK) cells acts as a coreceptor to enhance IFN-gamma production in response to LGALS9. In contrast, shown to suppress NK cell-mediated cytotoxicity. Negatively regulates NK cell function in LPS-induced endotoxic shock. The polypeptide is Hepatitis A virus cellular receptor 2 homolog (Havcr2) (Mus musculus (Mouse)).